The following is a 271-amino-acid chain: Fatty acid elongase 2 (271 aa).

The helical transmembrane segment at 16–36 (WMIDNVDVAGFLCLLYLGLVW) threads the bilayer. Asparagine 52 carries an N-linked (GlcNAc...) asparagine glycan. Helical transmembrane passes span 59–79 (VFIM…IVVV) and 110–130 (FWVG…VLLV). The HxxHH motif signature appears at 140–144 (HWYHH). The Nucleophile role is filled by histidine 143. Helical transmembrane passes span 162-182 (IFVF…YFAM), 194-214 (IAPV…AVTM), and 241-261 (GVVM…ESYL).

Belongs to the ELO family.

Its subcellular location is the endoplasmic reticulum membrane. It carries out the reaction an acyl-CoA + malonyl-CoA + H(+) = a 3-oxoacyl-CoA + CO2 + CoA. Its pathway is lipid metabolism; fatty acid biosynthesis. Its function is as follows. Involved in the synthesis of fatty acids. Elongates C10 fatty acids to C14. The polypeptide is Fatty acid elongase 2 (Trypanosoma brucei brucei (strain 927/4 GUTat10.1)).